A 426-amino-acid chain; its full sequence is Tol-Pal system protein TolB (426 aa).

An N-terminal signal peptide occupies residues 1 to 25 (MNILLSRFRLLLAAALAALSWGAQA).

Belongs to the TolB family. In terms of assembly, the Tol-Pal system is composed of five core proteins: the inner membrane proteins TolA, TolQ and TolR, the periplasmic protein TolB and the outer membrane protein Pal. They form a network linking the inner and outer membranes and the peptidoglycan layer.

The protein localises to the periplasm. Part of the Tol-Pal system, which plays a role in outer membrane invagination during cell division and is important for maintaining outer membrane integrity. This is Tol-Pal system protein TolB from Aromatoleum aromaticum (strain DSM 19018 / LMG 30748 / EbN1) (Azoarcus sp. (strain EbN1)).